The following is a 336-amino-acid chain: Cytoskeleton protein RodZ (336 aa).

Residues 1–111 (MNTEATHDQN…LGKRRKKRDG (111 aa)) lie on the Cytoplasmic side of the membrane. An HTH cro/C1-type domain is found at 19 to 71 (LRNAREQLGLSQQAVAERLCLKVSTVRDIEEDKAPADLASTFLRGYIRSYARL). The H-T-H motif DNA-binding region spans 30-49 (QQAVAERLCLKVSTVRDIEE). Residues 112–132 (WLMTFTWLVLFVVIGLSGAWW) traverse the membrane as a helical; Signal-anchor for type II membrane protein segment. Residues 133–336 (WQDHKAQQEE…TLNAEQSPAQ (204 aa)) are Periplasmic-facing. Over residues 148-164 (DQSSAELNNNQSQSVPL) the composition is skewed to polar residues. Residues 148-248 (DQSSAELNNN…TDQAGVTTPA (101 aa)) are disordered. A compositionally biased stretch (low complexity) spans 165 to 201 (DTSTTTDQAMATTPTSPVDTTATNTQTPAATTAPSPT). Polar residues predominate over residues 202-217 (VDSQQNAVVPPSQANV). A compositionally biased stretch (low complexity) spans 219 to 236 (TAATPAPAATTMPDGAAP).

Belongs to the RodZ family.

Its subcellular location is the cell inner membrane. Its function is as follows. Cytoskeletal protein that is involved in cell-shape control through regulation of the length of the long axis. The polypeptide is Cytoskeleton protein RodZ (Escherichia coli (strain SMS-3-5 / SECEC)).